Here is a 235-residue protein sequence, read N- to C-terminus: Large ribosomal subunit protein uL1 (235 aa).

This sequence belongs to the universal ribosomal protein uL1 family. In terms of assembly, part of the 50S ribosomal subunit.

Functionally, binds directly to 23S rRNA. The L1 stalk is quite mobile in the ribosome, and is involved in E site tRNA release. In terms of biological role, protein L1 is also a translational repressor protein, it controls the translation of the L11 operon by binding to its mRNA. The protein is Large ribosomal subunit protein uL1 of Pseudarthrobacter chlorophenolicus (strain ATCC 700700 / DSM 12829 / CIP 107037 / JCM 12360 / KCTC 9906 / NCIMB 13794 / A6) (Arthrobacter chlorophenolicus).